Here is a 242-residue protein sequence, read N- to C-terminus: UPF0173 metal-dependent hydrolase APE_1117 (242 aa).

This sequence belongs to the UPF0173 family.

This is UPF0173 metal-dependent hydrolase APE_1117 from Aeropyrum pernix (strain ATCC 700893 / DSM 11879 / JCM 9820 / NBRC 100138 / K1).